The sequence spans 710 residues: MSAPATDLSAGAPSGRRQILVTSALPYANGQIHIGHLVEYIQTDIWVRTLRMHGHEVYYVGADDTHGTPVMLRAEKEGLTPKQLIDRVWQEHKRDFDSFGISFDNYYSTDSEENRVLSENVYLALKEAGLIDARDIEQAYDPVKEMFLPDRFIKGECPKCGAKDQYGDSCEVCGSTYLPTELINPYSVVSGATPVRKTSTHYFFRLSDPRCENFLRAWVGGLAQPEATNKMREWLGDAGEAKLADWDISRDAPYFGFEIPGAPGKYFYVWLDAPVGYYASFKNLAEKRGLDFDAWVRKGSKAEQYHFIGKDILYFHTLFWPAMLEFSGHRTPTNVFAHGFLTVDGAKMSKSRGTFITAQSVIETGLNPEWLRYYFAAKLNSTMEDLDLNLDDFQARVNSDLVGKYVNIASRAAGFLIKRFDGRVQDSAMQHPLLASLRAAVPQIAANYEAREYNRALRQTMELADAVNAYVDTAKPWDQAKDPANGVALHETCSVSIEAFRLLSLALKPVLPKLAEAVEGFLAIQPLVWADANVPLSSTRPINAYKHLMTRVDPKQIEALLAANRDSLQATPEAAAPADAKGKSKAAKAAAGKDETPGIISIDDFAKIDLRIAKIVDCKAVEGSDKLLQLTLDVGEEKTRNVFSGIKSAYQPEQLVGKLTVMVANLAPRKMKFGLSEGMVLAASATDEKAEPGLYVLEPDSGAKPGMRVK.

The 'HIGH' region motif lies at 26–36 (PYANGQIHIGH). The Zn(2+) site is built by cysteine 157, cysteine 160, cysteine 170, and cysteine 173. The 'KMSKS' region motif lies at 347–351 (KMSKS). Residue lysine 350 participates in ATP binding. Residues 604-710 (DFAKIDLRIA…SGAKPGMRVK (107 aa)) enclose the tRNA-binding domain.

Belongs to the class-I aminoacyl-tRNA synthetase family. MetG type 1 subfamily. In terms of assembly, homodimer. Zn(2+) is required as a cofactor.

The protein resides in the cytoplasm. It catalyses the reaction tRNA(Met) + L-methionine + ATP = L-methionyl-tRNA(Met) + AMP + diphosphate. Its function is as follows. Is required not only for elongation of protein synthesis but also for the initiation of all mRNA translation through initiator tRNA(fMet) aminoacylation. This is Methionine--tRNA ligase from Paraburkholderia xenovorans (strain LB400).